The following is a 109-amino-acid chain: Spermidine export protein MdtI (109 aa).

The next 4 membrane-spanning stretches (helical) occupy residues 6 to 26 (WIHAAWLAIAIVLEIIANVFL), 36 to 56 (IYGILSLAAVLGAFSALSQAV), 64 to 84 (AYALWGGFGIAATIAAGWVLF), and 88 to 108 (LNNKGWAGVILLVAGMVLIKL).

The protein belongs to the drug/metabolite transporter (DMT) superfamily. Small multidrug resistance (SMR) (TC 2.A.7.1) family. MdtI subfamily. As to quaternary structure, forms a complex with MdtJ.

It localises to the cell inner membrane. Catalyzes the excretion of spermidine. This is Spermidine export protein MdtI from Klebsiella pneumoniae subsp. pneumoniae (strain ATCC 700721 / MGH 78578).